The chain runs to 203 residues: Protein-methionine-sulfoxide reductase heme-binding subunit MsrQ (203 aa).

Helical transmembrane passes span 10 to 30, 42 to 62, 75 to 95, 110 to 130, 147 to 167, and 169 to 189; these read IFVV…MSLL, LGLG…LQKL, LGLW…FFIL, PYII…ITSN, LVYA…RSDL, and EWSI…PAVA.

This sequence belongs to the MsrQ family. Heterodimer of a catalytic subunit (MsrP) and a heme-binding subunit (MsrQ). Requires FMN as cofactor. Heme b is required as a cofactor.

Its subcellular location is the cell inner membrane. Functionally, part of the MsrPQ system that repairs oxidized periplasmic proteins containing methionine sulfoxide residues (Met-O), using respiratory chain electrons. Thus protects these proteins from oxidative-stress damage caused by reactive species of oxygen and chlorine generated by the host defense mechanisms. MsrPQ is essential for the maintenance of envelope integrity under bleach stress, rescuing a wide series of structurally unrelated periplasmic proteins from methionine oxidation. MsrQ provides electrons for reduction to the reductase catalytic subunit MsrP, using the quinone pool of the respiratory chain. This chain is Protein-methionine-sulfoxide reductase heme-binding subunit MsrQ, found in Pseudomonas putida (strain GB-1).